We begin with the raw amino-acid sequence, 373 residues long: Cobalt-precorrin-5B C(1)-methyltransferase (373 aa).

The protein belongs to the CbiD family.

It carries out the reaction Co-precorrin-5B + S-adenosyl-L-methionine = Co-precorrin-6A + S-adenosyl-L-homocysteine. It functions in the pathway cofactor biosynthesis; adenosylcobalamin biosynthesis; cob(II)yrinate a,c-diamide from sirohydrochlorin (anaerobic route): step 6/10. Functionally, catalyzes the methylation of C-1 in cobalt-precorrin-5B to form cobalt-precorrin-6A. This chain is Cobalt-precorrin-5B C(1)-methyltransferase, found in Listeria monocytogenes serovar 1/2a (strain ATCC BAA-679 / EGD-e).